Consider the following 393-residue polypeptide: S-adenosylmethionine synthase (393 aa).

Glu-9 contributes to the Mg(2+) binding site. ATP is bound at residue His-15. Glu-43 provides a ligand contact to K(+). L-methionine contacts are provided by Glu-56 and Gln-99. Residues 167-169, 235-238, Asp-246, 252-253, Ala-269, Lys-273, and Lys-277 contribute to the ATP site; these read DGK, SGRF, and RK. Asp-246 provides a ligand contact to L-methionine. Lys-277 provides a ligand contact to L-methionine.

Belongs to the AdoMet synthase family. Homotetramer. Mn(2+) serves as cofactor. The cofactor is Mg(2+). It depends on Co(2+) as a cofactor. K(+) is required as a cofactor.

It is found in the cytoplasm. It carries out the reaction L-methionine + ATP + H2O = S-adenosyl-L-methionine + phosphate + diphosphate. It functions in the pathway amino-acid biosynthesis; S-adenosyl-L-methionine biosynthesis; S-adenosyl-L-methionine from L-methionine: step 1/1. Catalyzes the formation of S-adenosylmethionine from methionine and ATP. The reaction comprises two steps that are both catalyzed by the same enzyme: formation of S-adenosylmethionine (AdoMet) and triphosphate, and subsequent hydrolysis of the triphosphate. The sequence is that of S-adenosylmethionine synthase (SAM) from Camellia sinensis (Tea plant).